The chain runs to 232 residues: 7-cyano-7-deazaguanine synthase (232 aa).

An ATP-binding site is contributed by 8-18 (FSGGQDSTTCL). Positions 187, 196, 199, and 202 each coordinate Zn(2+).

This sequence belongs to the QueC family. Zn(2+) is required as a cofactor.

The catalysed reaction is 7-carboxy-7-deazaguanine + NH4(+) + ATP = 7-cyano-7-deazaguanine + ADP + phosphate + H2O + H(+). It functions in the pathway purine metabolism; 7-cyano-7-deazaguanine biosynthesis. Catalyzes the ATP-dependent conversion of 7-carboxy-7-deazaguanine (CDG) to 7-cyano-7-deazaguanine (preQ(0)). This chain is 7-cyano-7-deazaguanine synthase, found in Vibrio vulnificus (strain YJ016).